A 101-amino-acid chain; its full sequence is UPF0235 protein Mevan_0378 (101 aa).

Belongs to the UPF0235 family.

The polypeptide is UPF0235 protein Mevan_0378 (Methanococcus vannielii (strain ATCC 35089 / DSM 1224 / JCM 13029 / OCM 148 / SB)).